A 366-amino-acid chain; its full sequence is Erythronate-4-phosphate dehydrogenase (366 aa).

The substrate site is built by Ser-46 and Thr-67. Positions 147 and 175 each coordinate NAD(+). Arg-208 is an active-site residue. Asp-228 is a binding site for NAD(+). The active site involves Glu-233. His-250 (proton donor) is an active-site residue. Gly-253 contributes to the NAD(+) binding site. Tyr-254 is a binding site for substrate.

It belongs to the D-isomer specific 2-hydroxyacid dehydrogenase family. PdxB subfamily. In terms of assembly, homodimer.

Its subcellular location is the cytoplasm. It catalyses the reaction 4-phospho-D-erythronate + NAD(+) = (R)-3-hydroxy-2-oxo-4-phosphooxybutanoate + NADH + H(+). It functions in the pathway cofactor biosynthesis; pyridoxine 5'-phosphate biosynthesis; pyridoxine 5'-phosphate from D-erythrose 4-phosphate: step 2/5. Catalyzes the oxidation of erythronate-4-phosphate to 3-hydroxy-2-oxo-4-phosphonooxybutanoate. This Coxiella burnetii (strain RSA 331 / Henzerling II) protein is Erythronate-4-phosphate dehydrogenase.